The following is a 526-amino-acid chain: GMP synthase [glutamine-hydrolyzing] (526 aa).

One can recognise a Glutamine amidotransferase type-1 domain in the interval 10 to 208 (RILILDFGSQ…VVDLCGCEKL (199 aa)). Cys-87 serves as the catalytic Nucleophile. Active-site residues include His-182 and Glu-184. A GMPS ATP-PPase domain is found at 209–401 (WTTENIIDDS…LGLPSDMVYR (193 aa)). 236 to 242 (SGGVDSS) is an ATP binding site.

In terms of assembly, homodimer.

The catalysed reaction is XMP + L-glutamine + ATP + H2O = GMP + L-glutamate + AMP + diphosphate + 2 H(+). The protein operates within purine metabolism; GMP biosynthesis; GMP from XMP (L-Gln route): step 1/1. Catalyzes the synthesis of GMP from XMP. The sequence is that of GMP synthase [glutamine-hydrolyzing] from Hydrogenovibrio crunogenus (strain DSM 25203 / XCL-2) (Thiomicrospira crunogena).